A 75-amino-acid chain; its full sequence is Putative defensin-like protein 126 (75 aa).

Positions 1–24 (MSKSTFLFVYIILILGSMVNEIQG) are cleaved as a signal peptide. 4 disulfides stabilise this stretch: C29-C73, C38-C57, C43-C67, and C47-C69.

This sequence belongs to the DEFL family.

Its subcellular location is the secreted. This chain is Putative defensin-like protein 126 (LCR6), found in Arabidopsis thaliana (Mouse-ear cress).